A 430-amino-acid chain; its full sequence is Gamma-glutamyl phosphate reductase (430 aa).

This sequence belongs to the gamma-glutamyl phosphate reductase family.

The protein localises to the cytoplasm. The catalysed reaction is L-glutamate 5-semialdehyde + phosphate + NADP(+) = L-glutamyl 5-phosphate + NADPH + H(+). It functions in the pathway amino-acid biosynthesis; L-proline biosynthesis; L-glutamate 5-semialdehyde from L-glutamate: step 2/2. Catalyzes the NADPH-dependent reduction of L-glutamate 5-phosphate into L-glutamate 5-semialdehyde and phosphate. The product spontaneously undergoes cyclization to form 1-pyrroline-5-carboxylate. The sequence is that of Gamma-glutamyl phosphate reductase from Rhodopseudomonas palustris (strain TIE-1).